Consider the following 425-residue polypeptide: Ribosomal protein uS12 methylthiotransferase RimO (425 aa).

One can recognise an MTTase N-terminal domain in the interval 2 to 115 (KNFTVITLGC…IIDYIKQFSK (114 aa)). [4Fe-4S] cluster is bound by residues Cys11, Cys47, Cys78, Cys142, Cys146, and Cys149. Residues 128 to 357 (VEPPSYRYIK…MARQAVISLE (230 aa)) enclose the Radical SAM core domain. The TRAM domain maps to 360 to 425 (RALIGKKYEA…YEYDVKGVIV (66 aa)).

The protein belongs to the methylthiotransferase family. RimO subfamily. It depends on [4Fe-4S] cluster as a cofactor.

It is found in the cytoplasm. The catalysed reaction is L-aspartate(89)-[ribosomal protein uS12]-hydrogen + (sulfur carrier)-SH + AH2 + 2 S-adenosyl-L-methionine = 3-methylsulfanyl-L-aspartate(89)-[ribosomal protein uS12]-hydrogen + (sulfur carrier)-H + 5'-deoxyadenosine + L-methionine + A + S-adenosyl-L-homocysteine + 2 H(+). Functionally, catalyzes the methylthiolation of an aspartic acid residue of ribosomal protein uS12. This is Ribosomal protein uS12 methylthiotransferase RimO from Thermodesulfovibrio yellowstonii (strain ATCC 51303 / DSM 11347 / YP87).